Consider the following 717-residue polypeptide: Inhibitor of nuclear factor kappa-B kinase subunit epsilon (717 aa).

The Protein kinase domain occupies 9–315; sequence WHTDDLLGQG…LQRTVIHVFS (307 aa). 15-23 serves as a coordination point for ATP; that stretch reads LGQGATASV. A Glycyl lysine isopeptide (Lys-Gly) (interchain with G-Cter in ubiquitin) cross-link involves residue lysine 30. Lysine 38 contributes to the ATP binding site. Aspartate 135 serves as the catalytic Proton acceptor. Serine 172 carries the phosphoserine; by autocatalysis and IKKB modification. Lysine 231 participates in a covalent cross-link: Glycyl lysine isopeptide (Lys-Gly) (interchain with G-Cter in SUMO1). Residues 385–650 form an interaction with DDX3X region; that stretch reads SSDTPKGLAF…AQESLNKIFD (266 aa). A Glycyl lysine isopeptide (Lys-Gly) (interchain with G-Cter in ubiquitin) cross-link involves residue lysine 403. The segment at 452-473 is leucine-zipper; sequence LQDTCQQTLEVTRTALLYLSSS. The residue at position 503 (threonine 503) is a Phosphothreonine. Phosphoserine is present on serine 665.

It belongs to the protein kinase superfamily. Ser/Thr protein kinase family. I-kappa-B kinase subfamily. Homodimer. Interacts with MAVS/IPS1. Interacts (via protein kinase domain) with TTLL12 (via N-terminus); the interaction prevents MAVS binding to IKBKE. Interacts with the adapter proteins AZI2/NAP1, TANK and TBKBP1/SINTBAD. Interacts with SIKE1. Interacts with TICAM1/TRIF, IRF3 and RIGI; interactions are disrupted by the interaction between IKBKE and SIKE1. Interacts with TOPORS; induced by DNA damage. Interacts with CYLD, IKBKB, IKBKG and MYD88. Interacts with IFIH1. Interacts with DDX3X; the interaction may be induced upon virus infection. Interacts with TRIM6 (via SPRY box). Interacts with unanchored K48-linked polyubiquitin chains; this leads to IKBKE activation. Interacts with TBK1. Interacts with FKBP5. In terms of processing, sumoylation by TOPORS upon DNA damage is required for protection of cells against DNA damage-induced cell death. Desumoylated by SENP1. Autophosphorylated and phosphorylated by IKBKB/IKKB. Phosphorylation at Ser-172 is enhanced by the interaction with DDX3X. Phosphorylated at Thr-503 upon IFN activation. Post-translationally, 'Lys-63'-linked polyubiquitinated at Lys-30 and Lys-403 by TRAF2:BIRC2 and TRAF2:BIRC3 complexes. Ubiquitination is induced by LPS, TNFA and interleukin-1 and required for full kinase activity and KF-kappa-B pathway activation. In terms of tissue distribution, expressed in bone marrow-derived macrophages and at low levels in liver and white adipose tissue (at protein level). Detected in muscle and lung.

The protein localises to the cytoplasm. Its subcellular location is the nucleus. It is found in the PML body. The catalysed reaction is L-seryl-[I-kappa-B protein] + ATP = O-phospho-L-seryl-[I-kappa-B protein] + ADP + H(+). Its activity is regulated as follows. Kinase activity is inhibited competitively by amlexanox. In terms of biological role, serine/threonine kinase that plays an essential role in regulating inflammatory responses to viral infection, through the activation of the type I IFN, NF-kappa-B and STAT signaling. Also involved in TNFA and inflammatory cytokines, like Interleukin-1, signaling. Following activation of viral RNA sensors, such as RIG-I-like receptors, associates with DDX3X and phosphorylates interferon regulatory factors (IRFs), IRF3 and IRF7, as well as DDX3X. This activity allows subsequent homodimerization and nuclear translocation of the IRF3 leading to transcriptional activation of pro-inflammatory and antiviral genes including IFNB. In order to establish such an antiviral state, IKBKE forms several different complexes whose composition depends on the type of cell and cellular stimuli. Thus, several scaffolding molecules including IPS1/MAVS, TANK, AZI2/NAP1 or TBKBP1/SINTBAD can be recruited to the IKBKE-containing-complexes. Activated by polyubiquitination in response to TNFA and interleukin-1, regulates the NF-kappa-B signaling pathway through, at least, the phosphorylation of CYLD. Phosphorylates inhibitors of NF-kappa-B thus leading to the dissociation of the inhibitor/NF-kappa-B complex and ultimately the degradation of the inhibitor. In addition, is also required for the induction of a subset of ISGs which displays antiviral activity, may be through the phosphorylation of STAT1 at 'Ser-708'. Phosphorylation of STAT1 at 'Ser-708' also seems to promote the assembly and DNA binding of ISGF3 (STAT1:STAT2:IRF9) complexes compared to GAF (STAT1:STAT1) complexes, in this way regulating the balance between type I and type II IFN responses. Protects cells against DNA damage-induced cell death. Also plays an important role in energy balance regulation by sustaining a state of chronic, low-grade inflammation in obesity, wich leads to a negative impact on insulin sensitivity. Phosphorylates AKT1. The sequence is that of Inhibitor of nuclear factor kappa-B kinase subunit epsilon (Ikbke) from Mus musculus (Mouse).